Consider the following 464-residue polypeptide: Glutamate--tRNA ligase (464 aa).

A 'HIGH' region motif is present at residues 9-19; the sequence is PSPTGYLHIGG. The 'KMSKS' region signature appears at 242–246; the sequence is KISKR. K245 provides a ligand contact to ATP.

It belongs to the class-I aminoacyl-tRNA synthetase family. Glutamate--tRNA ligase type 1 subfamily. Monomer.

The protein localises to the cytoplasm. It carries out the reaction tRNA(Glu) + L-glutamate + ATP = L-glutamyl-tRNA(Glu) + AMP + diphosphate. Its function is as follows. Catalyzes the attachment of glutamate to tRNA(Glu) in a two-step reaction: glutamate is first activated by ATP to form Glu-AMP and then transferred to the acceptor end of tRNA(Glu). This chain is Glutamate--tRNA ligase, found in Neisseria meningitidis serogroup A / serotype 4A (strain DSM 15465 / Z2491).